The sequence spans 792 residues: 5-methyltetrahydropteroyltriglutamate--homocysteine methyltransferase (792 aa).

5-methyltetrahydropteroyltri-L-glutamate is bound by residues Arg-16–Lys-19 and Lys-112. Residues Ile-432–Ser-434 and Glu-485 contribute to the L-homocysteine site. L-methionine-binding positions include Ile-432 to Ser-434 and Glu-485. 5-methyltetrahydropteroyltri-L-glutamate is bound by residues Arg-516–Cys-517 and Trp-562. Asp-600 provides a ligand contact to L-homocysteine. Residue Asp-600 participates in L-methionine binding. Residue Glu-606 participates in 5-methyltetrahydropteroyltri-L-glutamate binding. Zn(2+) is bound by residues His-642, Cys-644, and Glu-666. His-695 (proton donor) is an active-site residue. Residue Cys-727 participates in Zn(2+) binding.

Belongs to the vitamin-B12 independent methionine synthase family. Zn(2+) serves as cofactor.

It carries out the reaction 5-methyltetrahydropteroyltri-L-glutamate + L-homocysteine = tetrahydropteroyltri-L-glutamate + L-methionine. Its pathway is amino-acid biosynthesis; L-methionine biosynthesis via de novo pathway; L-methionine from L-homocysteine (MetE route): step 1/1. Catalyzes the transfer of a methyl group from 5-methyltetrahydrofolate to homocysteine resulting in methionine formation. This chain is 5-methyltetrahydropteroyltriglutamate--homocysteine methyltransferase, found in Cupriavidus necator (strain ATCC 17699 / DSM 428 / KCTC 22496 / NCIMB 10442 / H16 / Stanier 337) (Ralstonia eutropha).